The chain runs to 168 residues: Small ribosomal subunit protein uS5 (168 aa).

The S5 DRBM domain occupies 14–77 (FEERVVSINR…EAAKKNLITV (64 aa)).

The protein belongs to the universal ribosomal protein uS5 family. In terms of assembly, part of the 30S ribosomal subunit. Contacts proteins S4 and S8.

In terms of biological role, with S4 and S12 plays an important role in translational accuracy. Its function is as follows. Located at the back of the 30S subunit body where it stabilizes the conformation of the head with respect to the body. This chain is Small ribosomal subunit protein uS5, found in Lactococcus lactis subsp. lactis (strain IL1403) (Streptococcus lactis).